The following is a 259-amino-acid chain: Aminoglycoside 3'-phosphotransferase (259 aa).

The active-site Proton acceptor is the D187.

Belongs to the aminoglycoside phosphotransferase family.

The enzyme catalyses kanamycin A + ATP = kanamycin 3'-phosphate + ADP + H(+). Resistance to kanamycin and structurally-related aminoglycosides, including amikacin. This is Aminoglycoside 3'-phosphotransferase (aphA-6) from Acinetobacter baumannii.